The chain runs to 352 residues: Protein-glutamate methylesterase/protein-glutamine glutaminase (352 aa).

Residues 5–123 form the Response regulatory domain; that stretch reads RILIVDDSVI…SKEKAIEYIR (119 aa). The residue at position 56 (Asp56) is a 4-aspartylphosphate. In terms of domain architecture, CheB-type methylesterase spans 166–352; it reads EIVAIGVSTG…LAEEIIRRIG (187 aa). Catalysis depends on residues Ser173, His200, and Asp296.

Belongs to the CheB family. In terms of processing, phosphorylated by CheA. Phosphorylation of the N-terminal regulatory domain activates the methylesterase activity.

It is found in the cytoplasm. It carries out the reaction [protein]-L-glutamate 5-O-methyl ester + H2O = L-glutamyl-[protein] + methanol + H(+). The enzyme catalyses L-glutaminyl-[protein] + H2O = L-glutamyl-[protein] + NH4(+). Functionally, involved in chemotaxis. Part of a chemotaxis signal transduction system that modulates chemotaxis in response to various stimuli. Catalyzes the demethylation of specific methylglutamate residues introduced into the chemoreceptors (methyl-accepting chemotaxis proteins or MCP) by CheR. Also mediates the irreversible deamidation of specific glutamine residues to glutamic acid. This chain is Protein-glutamate methylesterase/protein-glutamine glutaminase, found in Trichodesmium erythraeum (strain IMS101).